The sequence spans 270 residues: ATP synthase subunit a (270 aa).

Helical transmembrane passes span 27 to 47, 90 to 110, 147 to 166, 182 to 202, 211 to 231, and 238 to 258; these read FWTF…VFIL, IAPL…MDLI, VNMT…FYSV, PFNT…SLIA, LFGN…TLGV, and FLWA…FMML.

The protein belongs to the ATPase A chain family. F-type ATPases have 2 components, CF(1) - the catalytic core - and CF(0) - the membrane proton channel. CF(1) has five subunits: alpha(3), beta(3), gamma(1), delta(1), epsilon(1). CF(0) has three main subunits: a(1), b(2) and c(9-12). The alpha and beta chains form an alternating ring which encloses part of the gamma chain. CF(1) is attached to CF(0) by a central stalk formed by the gamma and epsilon chains, while a peripheral stalk is formed by the delta and b chains.

The protein localises to the cell inner membrane. Key component of the proton channel; it plays a direct role in the translocation of protons across the membrane. The polypeptide is ATP synthase subunit a (Pseudoalteromonas atlantica (strain T6c / ATCC BAA-1087)).